The sequence spans 347 residues: GTPase Obg (347 aa).

Residues 1–159 (MQFLDQAKIY…AWVWLRLKLL (159 aa)) form the Obg domain. Residues 124–144 (GRGNASYKSSTNRAPRQHGPG) form a disordered region. The 168-residue stretch at 160 to 327 (ADVGLVGLPN…ILDQLITMTG (168 aa)) folds into the OBG-type G domain. GTP contacts are provided by residues 166–173 (GLPNAGKS), 191–195 (FTTLH), 212–215 (DIPG), 279–282 (NKID), and 308–310 (SGA). Serine 173 and threonine 193 together coordinate Mg(2+).

This sequence belongs to the TRAFAC class OBG-HflX-like GTPase superfamily. OBG GTPase family. As to quaternary structure, monomer. The cofactor is Mg(2+).

It localises to the cytoplasm. Its function is as follows. An essential GTPase which binds GTP, GDP and possibly (p)ppGpp with moderate affinity, with high nucleotide exchange rates and a fairly low GTP hydrolysis rate. Plays a role in control of the cell cycle, stress response, ribosome biogenesis and in those bacteria that undergo differentiation, in morphogenesis control. The chain is GTPase Obg from Zymomonas mobilis subsp. mobilis (strain ATCC 31821 / ZM4 / CP4).